Here is a 215-residue protein sequence, read N- to C-terminus: Ribonuclease T (215 aa).

The Exonuclease domain maps to 20-194; sequence VVIDVETAGF…YDTERTAVLF (175 aa). Mg(2+) is bound by residues Asp23, Glu25, His181, and Asp186. The active-site Proton donor/acceptor is His181.

It belongs to the RNase T family. Homodimer. Mg(2+) serves as cofactor.

Its function is as follows. Trims short 3' overhangs of a variety of RNA species, leaving a one or two nucleotide 3' overhang. Responsible for the end-turnover of tRNA: specifically removes the terminal AMP residue from uncharged tRNA (tRNA-C-C-A). Also appears to be involved in tRNA biosynthesis. This is Ribonuclease T from Citrobacter koseri (strain ATCC BAA-895 / CDC 4225-83 / SGSC4696).